Reading from the N-terminus, the 120-residue chain is Immunoglobulin kappa variable 2-30 (120 aa).

Positions 1-20 (MRLPAQLLGLLMLWVPGSSG) are cleaved as a signal peptide. Positions 21-43 (DVVMTQSPLSLPVTLGQPASISC) are framework-1. The Ig-like domain occupies 21-120 (DVVMTQSPLS…YYCMQGTHWP (100 aa)). Cys43 and Cys113 are joined by a disulfide. The complementarity-determining-1 stretch occupies residues 44 to 59 (RSSQSLVYSDGNTYLN). A framework-2 region spans residues 60-74 (WFQQRPGQSPRRLIY). The complementarity-determining-2 stretch occupies residues 75-81 (KVSNRDS). A framework-3 region spans residues 82–113 (GVPDRFSGSGSGTDFTLKISRVEAEDVGVYYC). The segment at 114–120 (MQGTHWP) is complementarity-determining-3.

As to quaternary structure, immunoglobulins are composed of two identical heavy chains and two identical light chains; disulfide-linked.

It localises to the secreted. The protein resides in the cell membrane. Functionally, v region of the variable domain of immunoglobulin light chains that participates in the antigen recognition. Immunoglobulins, also known as antibodies, are membrane-bound or secreted glycoproteins produced by B lymphocytes. In the recognition phase of humoral immunity, the membrane-bound immunoglobulins serve as receptors which, upon binding of a specific antigen, trigger the clonal expansion and differentiation of B lymphocytes into immunoglobulins-secreting plasma cells. Secreted immunoglobulins mediate the effector phase of humoral immunity, which results in the elimination of bound antigens. The antigen binding site is formed by the variable domain of one heavy chain, together with that of its associated light chain. Thus, each immunoglobulin has two antigen binding sites with remarkable affinity for a particular antigen. The variable domains are assembled by a process called V-(D)-J rearrangement and can then be subjected to somatic hypermutations which, after exposure to antigen and selection, allow affinity maturation for a particular antigen. This Homo sapiens (Human) protein is Immunoglobulin kappa variable 2-30.